We begin with the raw amino-acid sequence, 171 residues long: Neuronal vesicle trafficking-associated protein 2 (171 aa).

A disordered region spans residues 1–21; the sequence is MVKLNSNPSEKGAKPPSVEDG. Residues 1–71 are Cytoplasmic-facing; the sequence is MVKLNSNPSE…FRVPKIAEFT (71 aa). The chain crosses the membrane as a helical; Signal-anchor for type II membrane protein span at residues 72–92; sequence VTILVSLALAFLACIVFLVVY. The Lumenal segment spans residues 93-171; sequence KAFTYDHSCP…EPKPPKTQGH (79 aa).

It belongs to the NSG family.

The protein resides in the membrane. The protein localises to the golgi apparatus. Its subcellular location is the trans-Golgi network membrane. It localises to the cell projection. It is found in the dendrite. The protein resides in the endosome membrane. The protein localises to the early endosome membrane. Its subcellular location is the late endosome membrane. It localises to the lysosome lumen. It is found in the cytoplasmic vesicle membrane. The protein resides in the golgi stack membrane. The protein localises to the endosome. Its subcellular location is the multivesicular body membrane. The polypeptide is Neuronal vesicle trafficking-associated protein 2 (Bos taurus (Bovine)).